The following is a 516-amino-acid chain: Poly(U)-binding-splicing factor PUF60-B (516 aa).

RRM domains lie at 86–164 (CRVY…RPGS) and 183–261 (NRIY…KAVT). Positions 356–398 (TAPASMGTPTSAVQLHTEVKREEDSRRTAEDHSAPVGNGQDSE) are disordered. Basic and acidic residues predominate over residues 372 to 388 (TEVKREEDSRRTAEDHS). The region spanning 419–506 (TVMVLRNMVG…RKVVAELYDQ (88 aa)) is the RRM 3; atypical domain.

It belongs to the RRM half pint family.

Its subcellular location is the nucleus. DNA- and RNA-binding protein, involved in transcription repression and pre-mRNA splicing. The sequence is that of Poly(U)-binding-splicing factor PUF60-B (puf60b) from Danio rerio (Zebrafish).